The following is a 368-amino-acid chain: Type 2 DNA topoisomerase 6 subunit A (368 aa).

The Topo IIA-type catalytic domain occupies 9-148 (TEDEIARERL…FHMRPEESGA (140 aa)). Tyr-103 acts as the O-(5'-phospho-DNA)-tyrosine intermediate in catalysis. Mg(2+) is bound by residues Glu-201 and Asp-253.

It belongs to the TOP6A family. As to quaternary structure, homodimer. Heterotetramer of two Top6A and two Top6B chains. Requires Mg(2+) as cofactor.

The catalysed reaction is ATP-dependent breakage, passage and rejoining of double-stranded DNA.. Its function is as follows. Relaxes both positive and negative superturns and exhibits a strong decatenase activity. The protein is Type 2 DNA topoisomerase 6 subunit A of Natronomonas pharaonis (strain ATCC 35678 / DSM 2160 / CIP 103997 / JCM 8858 / NBRC 14720 / NCIMB 2260 / Gabara) (Halobacterium pharaonis).